We begin with the raw amino-acid sequence, 286 residues long: 2-hydroxy-6-oxo-6-phenylhexa-2,4-dienoate hydrolase (286 aa).

Substrate-binding positions include Gly42–Gly43, Asn51, Asn111, Ser180, and Arg190. His265 (proton acceptor) is an active-site residue. Trp266 is a substrate binding site.

This sequence belongs to the AB hydrolase superfamily. BphD family. As to quaternary structure, homodimer.

The enzyme catalyses 2,6-dioxo-6-phenylhexa-3-enoate + H2O = 2-oxopent-4-enoate + benzoate + H(+). The protein operates within xenobiotic degradation; biphenyl degradation; 2-hydroxy-2,4-pentadienoate and benzoate from biphenyl: step 4/4. In terms of biological role, catalyzes an unusual C-C bond hydrolysis of 2-hydroxy-6-oxo-6-phenylhexa-2,4-dienoic acid (HOPDA) to produce benzoic acid and 2-hydroxy-2,4-pentadienoic acid (HPD). In Polaromonas naphthalenivorans (strain CJ2), this protein is 2-hydroxy-6-oxo-6-phenylhexa-2,4-dienoate hydrolase.